We begin with the raw amino-acid sequence, 253 residues long: MHAFAVDGLPEIDAGDDLAALVAERADLTDGDVVCVASTVVSKAEGRTAALAEFTPGPRAEEIAARLADVTGEQKDPRFAQAVIEEATEVIMDAPFLLTETTCGHVGVNAGIDRSNTGGAELLLLPKRPAESAARIQAGLAADVGVVVTDTSGRPFRHGQRGVALGWAGLPAARDWRGETDRDGHELAVTVEAVVDELAATANLVSGEGDDGTPVVVVREFEFGDHDGSEQLFRAVDGDFVRQALRGWTFDGA.

GTP contacts are provided by residues 9 to 12, 38 to 39, and K43; these read LPEI and ST. D113 contacts a divalent metal cation. Position 116 (N116) interacts with GTP. The a divalent metal cation site is built by D150, T151, and E208. 206 to 213 serves as a coordination point for GTP; it reads SGEGDDGT.

The protein belongs to the CofE family. In terms of assembly, homodimer. Mg(2+) is required as a cofactor. Requires Mn(2+) as cofactor. It depends on K(+) as a cofactor.

The catalysed reaction is oxidized coenzyme F420-0 + GTP + L-glutamate = oxidized coenzyme F420-1 + GDP + phosphate + H(+). The enzyme catalyses oxidized coenzyme F420-1 + GTP + L-glutamate = oxidized coenzyme F420-2 + GDP + phosphate + H(+). It functions in the pathway cofactor biosynthesis; coenzyme F420 biosynthesis. Catalyzes the GTP-dependent successive addition of two or more gamma-linked L-glutamates to the L-lactyl phosphodiester of 7,8-didemethyl-8-hydroxy-5-deazariboflavin (F420-0) to form coenzyme F420-0-glutamyl-glutamate (F420-2) or polyglutamated F420 derivatives. The chain is Coenzyme F420:L-glutamate ligase from Halobacterium salinarum (strain ATCC 29341 / DSM 671 / R1).